Reading from the N-terminus, the 253-residue chain is Transmembrane protein 51 (253 aa).

2 helical membrane-spanning segments follow: residues 17 to 37 (IGLG…VPGF) and 65 to 85 (VAYV…CLSI). Disordered stretches follow at residues 93-133 (QGED…YVPS) and 164-253 (LTGL…RPPD). A compositionally biased stretch (acidic residues) spans 113–124 (EDSQEEEEEDEE). S115 is subject to Phosphoserine. Residues 164–176 (LTGLDETTPTSTR) are compositionally biased toward polar residues. S182 and S192 each carry phosphoserine. Over residues 194–205 (LAKRLKPLKVRR) the composition is skewed to basic residues. The segment covering 206–217 (IKSEKLHLKDFR) has biased composition (basic and acidic residues). Residues 224–238 (NVPPPSIEPLTPPPQ) are compositionally biased toward pro residues. A compositionally biased stretch (basic and acidic residues) spans 242–253 (VQEKAPDTRPPD).

Its subcellular location is the membrane. This chain is Transmembrane protein 51 (TMEM51), found in Homo sapiens (Human).